The primary structure comprises 1197 residues: DNA-directed RNA polymerase subunit beta (1197 aa).

Belongs to the RNA polymerase beta chain family. In terms of assembly, the RNAP catalytic core consists of 2 alpha, 1 beta, 1 beta' and 1 omega subunit. When a sigma factor is associated with the core the holoenzyme is formed, which can initiate transcription.

It carries out the reaction RNA(n) + a ribonucleoside 5'-triphosphate = RNA(n+1) + diphosphate. DNA-dependent RNA polymerase catalyzes the transcription of DNA into RNA using the four ribonucleoside triphosphates as substrates. In Streptococcus pyogenes serotype M12 (strain MGAS9429), this protein is DNA-directed RNA polymerase subunit beta.